The sequence spans 158 residues: Phosphopantetheine adenylyltransferase (158 aa).

Substrate is bound at residue threonine 10. ATP-binding positions include 10-11 and histidine 18; that span reads TF. The substrate site is built by lysine 42, leucine 74, and arginine 88. ATP contacts are provided by residues 89-91, glutamate 99, and 124-130; these read GIR and WRYLSST.

Belongs to the bacterial CoaD family. In terms of assembly, homohexamer. The cofactor is Mg(2+).

The protein resides in the cytoplasm. The catalysed reaction is (R)-4'-phosphopantetheine + ATP + H(+) = 3'-dephospho-CoA + diphosphate. It participates in cofactor biosynthesis; coenzyme A biosynthesis; CoA from (R)-pantothenate: step 4/5. In terms of biological role, reversibly transfers an adenylyl group from ATP to 4'-phosphopantetheine, yielding dephospho-CoA (dPCoA) and pyrophosphate. This chain is Phosphopantetheine adenylyltransferase, found in Actinobacillus pleuropneumoniae serotype 5b (strain L20).